A 48-amino-acid chain; its full sequence is Sperm protamine R3 isoform 1 (48 aa).

Basic residues predominate over residues 1–29 (ARRRHSMKKKRKSVRRRKTRKNQRKRKNS). The tract at residues 1–48 (ARRRHSMKKKRKSVRRRKTRKNQRKRKNSLGRSFKQHGFLKQPPRFRP) is disordered.

In terms of tissue distribution, testis.

The protein localises to the nucleus. Its subcellular location is the chromosome. Its function is as follows. Protamines substitute for histones in the chromatin of sperm during the haploid phase of spermatogenesis. They compact sperm DNA into a highly condensed, stable and inactive complex. The sequence is that of Sperm protamine R3 isoform 1 from Hydrolagus colliei (Spotted ratfish).